Consider the following 1010-residue polypeptide: Phosphoenolpyruvate carboxylase (1010 aa).

Polar residues predominate over residues 1-18 (MIMRSPETSGASMPQSTA). Disordered stretches follow at residues 1–36 (MIMRSPETSGASMPQSTAHVPDGEQPRASGGSPGAG) and 132–154 (LRPSRSQDDETAAPFDPFAPPLA). Catalysis depends on residues His-195 and Lys-652. The disordered stretch occupies residues 967-986 (QNRQPPMSESPGTPEDRRTY).

Belongs to the PEPCase type 1 family. Mg(2+) serves as cofactor.

The catalysed reaction is oxaloacetate + phosphate = phosphoenolpyruvate + hydrogencarbonate. In terms of biological role, forms oxaloacetate, a four-carbon dicarboxylic acid source for the tricarboxylic acid cycle. This chain is Phosphoenolpyruvate carboxylase, found in Parasynechococcus marenigrum (strain WH8102).